The following is a 350-amino-acid chain: 3'-hydroxy-N-methyl-(S)-coclaurine 4'-O-methyltransferase (350 aa).

S-adenosyl-L-methionine contacts are provided by Gly-196, Asp-219, Asp-239, Met-240, and Lys-253. His-257 (proton acceptor) is an active-site residue.

This sequence belongs to the class I-like SAM-binding methyltransferase superfamily. Cation-independent O-methyltransferase family. COMT subfamily. As to quaternary structure, homodimer.

It catalyses the reaction (S)-3'-hydroxy-N-methylcoclaurine + S-adenosyl-L-methionine = (S)-reticuline + S-adenosyl-L-homocysteine + H(+). Its pathway is alkaloid biosynthesis; (S)-reticuline biosynthesis; (S)-reticuline from (S)-norcoclaurine: step 4/4. Functionally, catalyzes the transfer of the methyl group to the 4'-hydroxyl group of 3'-hydroxy-N-methylcoclaurine to form reticuline. The polypeptide is 3'-hydroxy-N-methyl-(S)-coclaurine 4'-O-methyltransferase (Coptis japonica (Japanese goldthread)).